The sequence spans 148 residues: Homoprotocatechuate degradative operon repressor (148 aa).

The HTH marR-type domain maps to 2–134 (HDSLTIALLQ…LTHLLEEFIA (133 aa)).

In terms of biological role, repressor for the homoprotocatechuate catabolic pathway hpc operon. This Escherichia coli protein is Homoprotocatechuate degradative operon repressor (hpcR).